The primary structure comprises 681 residues: Hydroxyproline O-galactosyltransferase GALT6 (681 aa).

The Cytoplasmic segment spans residues 1–28 (MRKPKLSKLERLEKFDIFVSLSKQRSVQ). The chain crosses the membrane as a helical; Signal-anchor for type II membrane protein span at residues 29 to 49 (ILMAVGLLYMLLITFEIPFVF). The Lumenal portion of the chain corresponds to 50 to 681 (KTGLSSLSQD…TGKPQCCNMR (632 aa)). The segment at 57–80 (SQDPLTRPEKHNSQRELQERRAPT) is disordered. Over residues 62–78 (TRPEKHNSQRELQERRA) the composition is skewed to basic and acidic residues. The Galectin domain maps to 187-401 (NIMELPCGLT…DIDVHSVFAG (215 aa)). Asn-629 carries N-linked (GlcNAc...) asparagine glycosylation.

It belongs to the glycosyltransferase 31 family. Mn(2+) serves as cofactor. In terms of tissue distribution, expressed in junveile leaves and stems, and at lower levels in cauline leaves and siliques.

The protein localises to the golgi apparatus membrane. The protein operates within protein modification; protein glycosylation. Functionally, possesses hydroxyproline O-galactosyltransferase activity. Transfers galactose from UDP-galactose to hydroxyproline residues in the arabinogalactan proteins (AGPs). Is specific for AGPs containing non-contiguous peptidyl hydroxyproline residues. Utilizes UDP-galactose solely as sugar donor. The addition of galactose onto the peptidyl hydroxyproline residues in AGP core proteins represents the first committed step in arabinogalactan polysaccharide addition. AGP glycans play essential roles in both vegetative and reproductive plant growth. The sequence is that of Hydroxyproline O-galactosyltransferase GALT6 from Arabidopsis thaliana (Mouse-ear cress).